Here is a 69-residue protein sequence, read N- to C-terminus: Cold shock-like protein CspC (69 aa).

A CSD domain is found at 6–66 (GQVKWFNESK…GQKGPAAVNV (61 aa)).

The protein localises to the cytoplasm. The protein is Cold shock-like protein CspC (cspC) of Shigella flexneri.